A 155-amino-acid polypeptide reads, in one-letter code: Microsomal glutathione S-transferase 1 (155 aa).

The Lumenal segment spans residues 3–9; the sequence is DLTELMK. Residues 10–33 form a helical membrane-spanning segment; that stretch reads NEVFMAFASYATIVLSKMMFMSTA. Residues 34-62 lie on the Cytoplasmic side of the membrane; it reads TAFYRLTRKVFANPEDCSSFGKGENAKKY. Glutathione is bound at residue arginine 38. Lysine 42, lysine 55, and lysine 60 each carry N6-acetyllysine. A helical transmembrane segment spans residues 63 to 96; it reads LRTDERVERVRRAHLNDLENIVPFLGIGLLYSLS. The glutathione site is built by arginine 73, arginine 74, histidine 76, and glutamate 81. Topologically, residues 97-99 are lumenal; it reads GPD. A helical membrane pass occupies residues 100–123; sequence LSTAILHFRLFVGARIYHTIAYLT. Tyrosine 121 is a glutathione binding site. The Cytoplasmic portion of the chain corresponds to 124-128; sequence PLPQP. The chain crosses the membrane as a helical span at residues 129-148; the sequence is NRGLAFFLGYGVTLSMAYRL. The Lumenal segment spans residues 149 to 155; the sequence is LKSRLYL.

The protein belongs to the MAPEG family. In terms of assembly, homotrimer; The trimer binds only one molecule of glutathione.

It is found in the endoplasmic reticulum membrane. It localises to the mitochondrion outer membrane. It carries out the reaction RX + glutathione = an S-substituted glutathione + a halide anion + H(+). Functionally, conjugation of reduced glutathione to a wide number of exogenous and endogenous hydrophobic electrophiles. In Sus scrofa (Pig), this protein is Microsomal glutathione S-transferase 1 (MGST1).